Here is a 162-residue protein sequence, read N- to C-terminus: Phosphopantetheine adenylyltransferase (162 aa).

Substrate is bound at residue Ser11. ATP-binding positions include 11–12 (SF) and His19. The substrate site is built by Lys43, Val76, and Arg90. ATP contacts are provided by residues 91–93 (GLR), Glu101, and 126–132 (HLYISSS).

It belongs to the bacterial CoaD family. Homohexamer. It depends on Mg(2+) as a cofactor.

The protein resides in the cytoplasm. The enzyme catalyses (R)-4'-phosphopantetheine + ATP + H(+) = 3'-dephospho-CoA + diphosphate. Its pathway is cofactor biosynthesis; coenzyme A biosynthesis; CoA from (R)-pantothenate: step 4/5. Its function is as follows. Reversibly transfers an adenylyl group from ATP to 4'-phosphopantetheine, yielding dephospho-CoA (dPCoA) and pyrophosphate. This is Phosphopantetheine adenylyltransferase from Streptococcus pneumoniae (strain CGSP14).